Here is a 373-residue protein sequence, read N- to C-terminus: SUN domain-containing protein 5 (373 aa).

Topologically, residues 1 to 103 (MPRTRNIGAL…LFCQKVMEKM (103 aa)) are nuclear. A helical membrane pass occupies residues 104 to 120 (GLLVLCVFGFWMFSMHL). Topologically, residues 121 to 373 (PSKVEVWQDD…PKDSHLEPLS (253 aa)) are perinuclear space. The stretch at 136–180 (LQSLRMYQEKVRHHTGEIQDLRGSMNQLIAKLQKMEAISDEQKMA) forms a coiled coil. Residues 204–362 (ASIDFEHTSA…YRVRVHGSVT (159 aa)) enclose the SUN domain.

As to quaternary structure, probable homotrimer. Interacts with DNAJB13. In terms of processing, highly glycosylated in the Golgi apparatus during spermiogenesis. As to expression, testis-specific, abundantly expressed in spermatocytes and round spermatids.

The protein localises to the nucleus inner membrane. The protein resides in the golgi apparatus. Its function is as follows. Plays an essential role in anchoring sperm head to the tail. Is responsible for the attachment of the coupling apparatus to the sperm nuclear envelope. This is SUN domain-containing protein 5 (Sun5) from Mus musculus (Mouse).